The chain runs to 1471 residues: Myosin-4 (1471 aa).

Positions 4–57 constitute a Myosin N-terminal SH3-like domain; sequence EVGTKCWYPHKEQGWIGGEVTKNDFFEGTFHLELKLEDGETVSIETNSFENDDD. Residues 71–777 enclose the Myosin motor domain; the sequence is ESTDDLTTLS…MLAFLEKLRT (707 aa). An ATP-binding site is contributed by 165–172; it reads GESGAGKT. Residues 647-669 form an actin-binding region; the sequence is LGELMAIINSTNVHYIRCIKPNS. IQ domains lie at 781 to 801, 804 to 824, 829 to 849, 876 to 898, and 899 to 928; these read NEIC…LQYL, MESI…TRVD, TRAA…EYYR, MLMA…DYRT, and LKRS…EVEE. Residues 938–1063 adopt a coiled-coil conformation; the sequence is GLLEEAIEFK…LAFIENVIAQ (126 aa). In terms of domain architecture, Dilute spans 1164–1419; that stretch reads SKVLLTVESI…LNYLANVIKR (256 aa).

The protein belongs to the TRAFAC class myosin-kinesin ATPase superfamily. Myosin family. Interacts with SHE2 and SHE3.

It is found in the bud. In terms of biological role, part of the mRNA localization machinery that restricts accumulation of certain proteins to the bud and in the daughter cell. Recruited to specific mRNAs including the ASH1 mRNA, coding for a repressor of the HO endonuclease, via its interaction with SHE3. This chain is Myosin-4 (MYO4), found in Saccharomyces cerevisiae (strain ATCC 204508 / S288c) (Baker's yeast).